The following is a 361-amino-acid chain: Phosphoserine aminotransferase (361 aa).

L-glutamate-binding residues include S9 and R42. Residues 76–77, W102, T153, D173, and Q196 each bind pyridoxal 5'-phosphate; that span reads GR. An N6-(pyridoxal phosphate)lysine modification is found at K197. Position 238-239 (238-239) interacts with pyridoxal 5'-phosphate; the sequence is NT.

This sequence belongs to the class-V pyridoxal-phosphate-dependent aminotransferase family. SerC subfamily. Homodimer. Pyridoxal 5'-phosphate is required as a cofactor.

Its subcellular location is the cytoplasm. The enzyme catalyses O-phospho-L-serine + 2-oxoglutarate = 3-phosphooxypyruvate + L-glutamate. It catalyses the reaction 4-(phosphooxy)-L-threonine + 2-oxoglutarate = (R)-3-hydroxy-2-oxo-4-phosphooxybutanoate + L-glutamate. It participates in amino-acid biosynthesis; L-serine biosynthesis; L-serine from 3-phospho-D-glycerate: step 2/3. It functions in the pathway cofactor biosynthesis; pyridoxine 5'-phosphate biosynthesis; pyridoxine 5'-phosphate from D-erythrose 4-phosphate: step 3/5. Catalyzes the reversible conversion of 3-phosphohydroxypyruvate to phosphoserine and of 3-hydroxy-2-oxo-4-phosphonooxybutanoate to phosphohydroxythreonine. In Cronobacter sakazakii (strain ATCC BAA-894) (Enterobacter sakazakii), this protein is Phosphoserine aminotransferase.